The sequence spans 103 residues: ATP synthase F(0) complex subunit g, mitochondrial (103 aa).

An N-acetylalanine modification is found at A2. Residues K11, K24, K35, and K54 each carry the N6-acetyllysine modification.

It belongs to the ATPase g subunit family. Component of the ATP synthase complex composed at least of ATP5F1A/subunit alpha, ATP5F1B/subunit beta, ATP5MC1/subunit c (homooctomer), MT-ATP6/subunit a, MT-ATP8/subunit 8, ATP5ME/subunit e, ATP5MF/subunit f, ATP5MG/subunit g, ATP5MK/subunit k, ATP5MJ/subunit j, ATP5F1C/subunit gamma, ATP5F1D/subunit delta, ATP5F1E/subunit epsilon, ATP5PF/subunit F6, ATP5PB/subunit b, ATP5PD/subunit d, ATP5PO/subunit OSCP. ATP synthase complex consists of a soluble F(1) head domain (subunits alpha(3) and beta(3)) - the catalytic core - and a membrane F(0) domain - the membrane proton channel (subunits c, a, 8, e, f, g, k and j). These two domains are linked by a central stalk (subunits gamma, delta, and epsilon) rotating inside the F1 region and a stationary peripheral stalk (subunits F6, b, d, and OSCP).

The protein localises to the mitochondrion. It localises to the mitochondrion inner membrane. In terms of biological role, subunit g, of the mitochondrial membrane ATP synthase complex (F(1)F(0) ATP synthase or Complex V) that produces ATP from ADP in the presence of a proton gradient across the membrane which is generated by electron transport complexes of the respiratory chain. ATP synthase complex consist of a soluble F(1) head domain - the catalytic core - and a membrane F(1) domain - the membrane proton channel. These two domains are linked by a central stalk rotating inside the F(1) region and a stationary peripheral stalk. During catalysis, ATP synthesis in the catalytic domain of F(1) is coupled via a rotary mechanism of the central stalk subunits to proton translocation. In vivo, can only synthesize ATP although its ATP hydrolase activity can be activated artificially in vitro. Part of the complex F(0) domain. The polypeptide is ATP synthase F(0) complex subunit g, mitochondrial (Pongo abelii (Sumatran orangutan)).